We begin with the raw amino-acid sequence, 187 residues long: RNA pyrophosphohydrolase (187 aa).

In terms of domain architecture, Nudix hydrolase spans 6-149 (GYRANVGIIL…KRQVYRQALT (144 aa)). The Nudix box motif lies at 38–59 (GGIKSGETPTEAMYRELAEETG). The interval 166–187 (AYREPLEPVEKNRKKSSDTRQS) is disordered.

The protein belongs to the Nudix hydrolase family. RppH subfamily. It depends on a divalent metal cation as a cofactor.

Functionally, accelerates the degradation of transcripts by removing pyrophosphate from the 5'-end of triphosphorylated RNA, leading to a more labile monophosphorylated state that can stimulate subsequent ribonuclease cleavage. The polypeptide is RNA pyrophosphohydrolase (Nitrosomonas europaea (strain ATCC 19718 / CIP 103999 / KCTC 2705 / NBRC 14298)).